Consider the following 512-residue polypeptide: Respiratory nitrate reductase 1 beta chain (512 aa).

3 4Fe-4S ferredoxin-type domains span residues 7–35, 175–206, and 208–237; these read VGMV…SREG, TFMM…KREE, and GIVL…FNWK. Residues cysteine 16, cysteine 19, cysteine 22, cysteine 26, cysteine 184, cysteine 187, and cysteine 192 each coordinate [4Fe-4S] cluster. Residues cysteine 196, cysteine 217, and cysteine 223 each coordinate [3Fe-4S] cluster. Cysteine 227, cysteine 244, cysteine 247, cysteine 259, and cysteine 263 together coordinate [4Fe-4S] cluster.

Dimer of heterotrimers each composed of an alpha, a beta and a gamma chain. Alpha and beta are catalytic chains; gamma chains are involved in binding the enzyme complex to the cytoplasmic membrane. The cofactor is [4Fe-4S] cluster. [3Fe-4S] cluster serves as cofactor.

It localises to the cell membrane. It catalyses the reaction nitrate + a quinol = a quinone + nitrite + H2O. The nitrate reductase enzyme complex allows S.flexneri to use nitrate as an electron acceptor during anaerobic growth. The beta chain is an electron transfer unit containing four cysteine clusters involved in the formation of iron-sulfur centers. Electrons are transferred from the gamma chain to the molybdenum cofactor of the alpha subunit. The polypeptide is Respiratory nitrate reductase 1 beta chain (narH) (Shigella flexneri).